The chain runs to 161 residues: Tropomyosin (161 aa).

A coiled-coil region spans residues 1–161 (MDKLREKINA…DEVHQALEDL (161 aa)). Positions 40-52 (EQEYESLSRKSEA) are enriched in basic and acidic residues. Disordered stretches follow at residues 40–65 (EQEYESLSRKSEAAESQLEELEEETK) and 107–134 (EKMRQTDVKAEHFERRVQSLERERDDME).

In terms of assembly, homodimer.

The protein resides in the cytoplasm. Its subcellular location is the cytoskeleton. Its function is as follows. Forms part of the F-actin contractile ring during cytokinesis. The polypeptide is Tropomyosin (cdc8) (Schizosaccharomyces pombe (strain 972 / ATCC 24843) (Fission yeast)).